The sequence spans 436 residues: MTSNAELFSAAQAVIPGGVDSPVRAYGSVGGVPRFIEKAQGPWIWDAEGTRYVDLVCTWGPALLGHARPEVVSAVQVAASKGLSFGAPTRTETELADAIIERMAPVEKVRFVSTGTEATMTAVRLARGATGRDVIVKFAGNYHGHSDVLLAAAGSGVATAGLPGSAGVPAASTADTIVVDYNDVAALDAVFSERGDQIAAVIVESCPANMGVVPPEPGFNAAIRRLTTEHGALMITDEVLTGFRCSPSGFWGLQQQAGEDFAPDIFTFGKVVGGGMPLAALGGHADVMDLLAPTGPVYQAGTLSGNPLATVAGVKTLQLADAEVYQRLDVRSEKWRNELESALDAAGVTYRLQNAGNLFSVFLGVDSPVRNYDNAKSQNAEAYTAFFHAMLDAGVNLPPSCFEAWFLSDAHDDEAFEVFRAALPRAAQAAAQVISA.

Lys-270 is modified (N6-(pyridoxal phosphate)lysine).

The protein belongs to the class-III pyridoxal-phosphate-dependent aminotransferase family. HemL subfamily. In terms of assembly, homodimer. The cofactor is pyridoxal 5'-phosphate.

The protein localises to the cytoplasm. It carries out the reaction (S)-4-amino-5-oxopentanoate = 5-aminolevulinate. The protein operates within porphyrin-containing compound metabolism; protoporphyrin-IX biosynthesis; 5-aminolevulinate from L-glutamyl-tRNA(Glu): step 2/2. The chain is Glutamate-1-semialdehyde 2,1-aminomutase from Cutibacterium acnes (strain DSM 16379 / KPA171202) (Propionibacterium acnes).